The following is a 164-amino-acid chain: Putative pre-16S rRNA nuclease (164 aa).

Belongs to the YqgF nuclease family.

It is found in the cytoplasm. Functionally, could be a nuclease involved in processing of the 5'-end of pre-16S rRNA. This is Putative pre-16S rRNA nuclease from Caulobacter sp. (strain K31).